A 48-amino-acid chain; its full sequence is Large ribosomal subunit protein bL34 (48 aa).

It belongs to the bacterial ribosomal protein bL34 family.

The polypeptide is Large ribosomal subunit protein bL34 (rpmH) (Mycoplasma genitalium (strain ATCC 33530 / DSM 19775 / NCTC 10195 / G37) (Mycoplasmoides genitalium)).